Consider the following 554-residue polypeptide: Terpene synthase 17 (554 aa).

Residues Asp306, Asp310, and Glu458 each coordinate Mg(2+). A DDXXD motif motif is present at residues Asp306–Asp310.

The protein belongs to the terpene synthase family. Tpsa subfamily. Requires Mg(2+) as cofactor. Mn(2+) is required as a cofactor. Mostly expressed in stem and trichomes, to a lower extent in leaves, flowers and roots and, at low levels, in fruits.

The catalysed reaction is (2Z,6Z)-farnesyl diphosphate = beta-bisabolene + diphosphate. It carries out the reaction (2E,6E)-farnesyl diphosphate = (+)-valencene + diphosphate. The enzyme catalyses (2E,6E)-farnesyl diphosphate = (E)-beta-farnesene + diphosphate. It catalyses the reaction (2E,6E)-farnesyl diphosphate = gamma-gurjunene + diphosphate. The catalysed reaction is (2Z,6Z)-farnesyl diphosphate = (E)-gamma-bisabolene + diphosphate. It carries out the reaction (2E)-geranyl diphosphate = limonene + diphosphate. The enzyme catalyses (2E)-geranyl diphosphate = beta-myrcene + diphosphate. It catalyses the reaction (2E)-geranyl diphosphate = (E)-beta-ocimene + diphosphate. The catalysed reaction is (2E)-geranyl diphosphate = terpinolene + diphosphate. It carries out the reaction (2E)-geranyl diphosphate = gamma-terpinene + diphosphate. The enzyme catalyses (2Z,6Z)-farnesyl diphosphate = (Z)-gamma-bisabolene + diphosphate. It catalyses the reaction (2E,6E)-farnesyl diphosphate = (1S,5S,6R)-alpha-bergamotene + diphosphate. The catalysed reaction is (2Z,6Z)-farnesyl diphosphate = (1S,5S,6S)-alpha-bergamotene + diphosphate. It functions in the pathway secondary metabolite biosynthesis; terpenoid biosynthesis. Its function is as follows. Sesquiterpene synthase involved in the biosynthesis of volatile compounds. Mediates the conversion of (2E,6E)-farnesyl diphosphate (FPP) into gamma-gurjunene, (E)-beta-farnesene and (+)-valencene, and of (2Z,6Z)-farnesyl diphosphate ((ZZ)-FPP) into (E)-alpha-bergamotene and (Z)-gamma-bisabolene as well as beta-bisabolene, (Z)-alpha-bergamotene and (E)-gamma-bisabolene to a lower extent. Can act with a low efficiency as a monoterpene synthase with geranyl diphosphate (GPP) as substrate, thus producing beta-myrcene, (E)-beta-ocimene, limonene, terpinolene, gamma-terpinene and (Z)-beta-ocimene. The protein is Terpene synthase 17 of Solanum lycopersicum (Tomato).